A 177-amino-acid polypeptide reads, in one-letter code: UPF0178 protein TP_0845 (177 aa).

Positions 155 to 177 (EAKTGEEQCDWPSAQGKSQTGRR) are disordered.

This sequence belongs to the UPF0178 family.

The protein is UPF0178 protein TP_0845 of Treponema pallidum (strain Nichols).